We begin with the raw amino-acid sequence, 279 residues long: MTQHFPTRQLRFFLTAPTPCPYLPGREERKVFAHLPLSDGPIVNDSLTQVGFRRSQNIAYRPACETCRACQSARAPATEYILSRSERKILGRNDDLERHLVEAEATLEQFELLRRYLLTRHADGGMAEMTWPDYVAMVEDTAVRTHLIEYRRKSLDRGPGDLVACVLVDVLADGLSLVYSFYEPDQPRRSLGSFIILDHIVQAQQNALPYVYLGYWVPGSEKMAYKARFSPLEILKPGGWSLMSARERGARPPRGPGALKDACDLPLSDAQPADIEDLD.

The interval 245 to 279 (ARERGARPPRGPGALKDACDLPLSDAQPADIEDLD) is disordered.

This sequence belongs to the R-transferase family. Bpt subfamily.

The protein resides in the cytoplasm. It carries out the reaction N-terminal L-glutamyl-[protein] + L-leucyl-tRNA(Leu) = N-terminal L-leucyl-L-glutamyl-[protein] + tRNA(Leu) + H(+). It catalyses the reaction N-terminal L-aspartyl-[protein] + L-leucyl-tRNA(Leu) = N-terminal L-leucyl-L-aspartyl-[protein] + tRNA(Leu) + H(+). Functionally, functions in the N-end rule pathway of protein degradation where it conjugates Leu from its aminoacyl-tRNA to the N-termini of proteins containing an N-terminal aspartate or glutamate. This chain is Aspartate/glutamate leucyltransferase, found in Caulobacter vibrioides (strain ATCC 19089 / CIP 103742 / CB 15) (Caulobacter crescentus).